Consider the following 303-residue polypeptide: Methionyl-tRNA formyltransferase (303 aa).

109–112 (SLLP) lines the (6S)-5,6,7,8-tetrahydrofolate pocket.

Belongs to the Fmt family.

It catalyses the reaction L-methionyl-tRNA(fMet) + (6R)-10-formyltetrahydrofolate = N-formyl-L-methionyl-tRNA(fMet) + (6S)-5,6,7,8-tetrahydrofolate + H(+). In terms of biological role, attaches a formyl group to the free amino group of methionyl-tRNA(fMet). The formyl group appears to play a dual role in the initiator identity of N-formylmethionyl-tRNA by promoting its recognition by IF2 and preventing the misappropriation of this tRNA by the elongation apparatus. The polypeptide is Methionyl-tRNA formyltransferase (Helicobacter pylori (strain ATCC 700392 / 26695) (Campylobacter pylori)).